A 125-amino-acid chain; its full sequence is U-scoloptoxin(05)-Er1a (125 aa).

The N-terminal stretch at 1 to 20 (MLSLGVSIFLLVFLIPENSG) is a signal peptide.

It belongs to the scoloptoxin-05 family. In terms of processing, contains 4 disulfide bonds. Expressed by the venom gland.

The protein localises to the secreted. This is U-scoloptoxin(05)-Er1a from Ethmostigmus rubripes (Giant centipede).